The primary structure comprises 150 residues: Ribosome maturation factor RimP (150 aa).

It belongs to the RimP family.

Its subcellular location is the cytoplasm. Its function is as follows. Required for maturation of 30S ribosomal subunits. The sequence is that of Ribosome maturation factor RimP from Francisella philomiragia subsp. philomiragia (strain ATCC 25017 / CCUG 19701 / FSC 153 / O#319-036).